Reading from the N-terminus, the 100-residue chain is MARKSLIQREKKRQKLEQKYHSIRRSSKKEISKVPSLSDKWEIYGKLQSPPRNSAPTRLHRRCFLTGRPRANYRDFGLSGHILREMVHACLLPGATRSSW.

Positions 1 to 31 are disordered; that stretch reads MARKSLIQREKKRQKLEQKYHSIRRSSKKEI.

It belongs to the universal ribosomal protein uS14 family. In terms of assembly, part of the 30S ribosomal subunit.

It is found in the plastid. The protein resides in the chloroplast. Its function is as follows. Binds 16S rRNA, required for the assembly of 30S particles. This chain is Small ribosomal subunit protein uS14c, found in Nicotiana tomentosiformis (Tobacco).